A 414-amino-acid chain; its full sequence is Probable solanesyl-diphosphate synthase 3, chloroplastic (414 aa).

Low complexity predominate over residues 1–23 (MAAPSSLASSSHLSRRATAAASP). Residues 1 to 36 (MAAPSSLASSSHLSRRATAAASPSIPPPSPPPPPQR) are disordered. Residues 1–72 (MAAPSSLASS…KPGVAAVDVP (72 aa)) constitute a chloroplast transit peptide. Pro residues predominate over residues 24–35 (SIPPPSPPPPPQ). Residues Lys134, Arg137, and His172 each contribute to the isopentenyl diphosphate site. Asp179 and Asp183 together coordinate Mg(2+). Arg188 is an an all-trans-polyprenyl diphosphate binding site. Arg189 contributes to the isopentenyl diphosphate binding site. An all-trans-polyprenyl diphosphate-binding residues include Lys265, Thr266, Gln303, and Lys320.

This sequence belongs to the FPP/GGPP synthase family. In terms of assembly, homodimer. Mg(2+) serves as cofactor.

It is found in the plastid. It localises to the chloroplast. The catalysed reaction is 7 isopentenyl diphosphate + (2E)-geranyl diphosphate = all-trans-nonaprenyl diphosphate + 7 diphosphate. In terms of biological role, involved in providing solanesyl diphosphate for plastoquinone-9 (PQ-9) formation. This Oryza sativa subsp. japonica (Rice) protein is Probable solanesyl-diphosphate synthase 3, chloroplastic.